Here is a 421-residue protein sequence, read N- to C-terminus: ATP-dependent RNA helicase RhlB (421 aa).

A Q motif motif is present at residues Gln9–Ala37. Residues Leu40–Ile219 enclose the Helicase ATP-binding domain. Ala53–Thr60 provides a ligand contact to ATP. The short motif at Asp165–Asp168 is the DEAD box element. One can recognise a Helicase C-terminal domain in the interval Arg245 to Met390. Positions Asp392–Gly421 are disordered. The segment covering Pro402 to Pro414 has biased composition (low complexity).

This sequence belongs to the DEAD box helicase family. RhlB subfamily. Component of the RNA degradosome, which is a multiprotein complex involved in RNA processing and mRNA degradation.

It is found in the cytoplasm. It carries out the reaction ATP + H2O = ADP + phosphate + H(+). In terms of biological role, DEAD-box RNA helicase involved in RNA degradation. Has RNA-dependent ATPase activity and unwinds double-stranded RNA. This is ATP-dependent RNA helicase RhlB from Escherichia coli O7:K1 (strain IAI39 / ExPEC).